A 341-amino-acid polypeptide reads, in one-letter code: tRNA N6-adenosine threonylcarbamoyltransferase (341 aa).

Residues histidine 113 and histidine 117 each contribute to the Fe cation site. Residues 141 to 145 (LVSGG), aspartate 174, glycine 187, and asparagine 282 contribute to the substrate site. Fe cation is bound at residue aspartate 310.

This sequence belongs to the KAE1 / TsaD family. Fe(2+) is required as a cofactor.

It localises to the cytoplasm. It carries out the reaction L-threonylcarbamoyladenylate + adenosine(37) in tRNA = N(6)-L-threonylcarbamoyladenosine(37) in tRNA + AMP + H(+). Required for the formation of a threonylcarbamoyl group on adenosine at position 37 (t(6)A37) in tRNAs that read codons beginning with adenine. Is involved in the transfer of the threonylcarbamoyl moiety of threonylcarbamoyl-AMP (TC-AMP) to the N6 group of A37, together with TsaE and TsaB. TsaD likely plays a direct catalytic role in this reaction. This Porphyromonas gingivalis (strain ATCC BAA-308 / W83) protein is tRNA N6-adenosine threonylcarbamoyltransferase.